Here is a 426-residue protein sequence, read N- to C-terminus: Protein FAM181B (426 aa).

Disordered regions lie at residues 106–157 (GLMG…AAAA) and 226–246 (NLPPSFFTEPSRAGGGGCGPS). Over residues 128–141 (PLAAPSAPTVAAPA) the composition is skewed to low complexity.

Belongs to the FAM181 family.

In Homo sapiens (Human), this protein is Protein FAM181B (FAM181B).